The primary structure comprises 122 residues: uncharacterized protein (122 aa).

Helical transmembrane passes span alanine 33–proline 53, valine 58–tryptophan 78, and proline 97–alanine 117.

To E.coli YidH.

The protein resides in the cell membrane. This is an uncharacterized protein from Mycobacterium tuberculosis (strain CDC 1551 / Oshkosh).